The chain runs to 673 residues: DNA ligase (673 aa).

An NAD(+)-binding site is contributed by 34 to 38 (DAAFD). The disordered stretch occupies residues 54–73 (LRRPDSPTQRVGGATAPDFA). NAD(+)-binding positions include 83 to 84 (SL) and Glu-114. The N6-AMP-lysine intermediate role is filled by Lys-116. Residues Arg-137, Glu-176, Lys-292, and Lys-316 each contribute to the NAD(+) site. Positions 410, 413, 428, and 433 each coordinate Zn(2+). Residues 594–673 (PAEGPLAGMT…DEFCERYLQG (80 aa)) enclose the BRCT domain.

Belongs to the NAD-dependent DNA ligase family. LigA subfamily. It depends on Mg(2+) as a cofactor. Requires Mn(2+) as cofactor.

It catalyses the reaction NAD(+) + (deoxyribonucleotide)n-3'-hydroxyl + 5'-phospho-(deoxyribonucleotide)m = (deoxyribonucleotide)n+m + AMP + beta-nicotinamide D-nucleotide.. In terms of biological role, DNA ligase that catalyzes the formation of phosphodiester linkages between 5'-phosphoryl and 3'-hydroxyl groups in double-stranded DNA using NAD as a coenzyme and as the energy source for the reaction. It is essential for DNA replication and repair of damaged DNA. In Symbiobacterium thermophilum (strain DSM 24528 / JCM 14929 / IAM 14863 / T), this protein is DNA ligase.